A 123-amino-acid polypeptide reads, in one-letter code: Probable cytochrome c 2.2 (123 aa).

The disordered stretch occupies residues 1–21 (MGKKKSDTASGGAIPEGDNEK). Heme c-binding residues include cysteine 30, cysteine 33, histidine 34, and methionine 95.

It belongs to the cytochrome c family. Binds 1 heme c group covalently per subunit.

Its subcellular location is the mitochondrion intermembrane space. Electron carrier protein. The oxidized form of the cytochrome c heme group can accept an electron from the heme group of the cytochrome c1 subunit of cytochrome reductase. Cytochrome c then transfers this electron to the cytochrome oxidase complex, the final protein carrier in the mitochondrial electron-transport chain. The polypeptide is Probable cytochrome c 2.2 (cyc-2.2) (Caenorhabditis elegans).